The sequence spans 383 residues: S-adenosylmethionine synthase (383 aa).

Position 15 (His-15) interacts with ATP. Position 17 (Asp-17) interacts with Mg(2+). K(+) is bound at residue Glu-43. The L-methionine site is built by Glu-56 and Gln-99. The segment at Gln-99–Arg-109 is flexible loop. Residues Asp-164 to Lys-166, Arg-230 to Phe-231, Asp-239, Arg-245 to Lys-246, Ala-262, and Lys-266 contribute to the ATP site. An L-methionine-binding site is contributed by Asp-239. An L-methionine-binding site is contributed by Lys-270.

Belongs to the AdoMet synthase family. Homotetramer; dimer of dimers. Mg(2+) serves as cofactor. K(+) is required as a cofactor.

Its subcellular location is the cytoplasm. It carries out the reaction L-methionine + ATP + H2O = S-adenosyl-L-methionine + phosphate + diphosphate. It functions in the pathway amino-acid biosynthesis; S-adenosyl-L-methionine biosynthesis; S-adenosyl-L-methionine from L-methionine: step 1/1. Its function is as follows. Catalyzes the formation of S-adenosylmethionine (AdoMet) from methionine and ATP. The overall synthetic reaction is composed of two sequential steps, AdoMet formation and the subsequent tripolyphosphate hydrolysis which occurs prior to release of AdoMet from the enzyme. The sequence is that of S-adenosylmethionine synthase from Actinobacillus pleuropneumoniae serotype 7 (strain AP76).